Consider the following 423-residue polypeptide: Putative competence-damage inducible protein (423 aa).

This sequence belongs to the CinA family.

This Streptococcus thermophilus (strain ATCC BAA-491 / LMD-9) protein is Putative competence-damage inducible protein.